We begin with the raw amino-acid sequence, 271 residues long: Inactive phospholipid phosphatase 7 (271 aa).

Residues Met-1 to Asp-69 are disordered. Topologically, residues Met-1–Met-112 are cytoplasmic. A compositionally biased stretch (polar residues) spans Ser-24–Arg-36. Phosphoserine occurs at positions 43 and 62. The tract at residues Cys-70–Cys-91 is interaction with MTOR. Residues Val-113–Leu-133 form a helical membrane-spanning segment. Topologically, residues Val-134–Gly-141 are extracellular. The chain crosses the membrane as a helical span at residues Gln-142 to Val-162. Topologically, residues Gln-163–Lys-202 are cytoplasmic. The chain crosses the membrane as a helical span at residues Phe-203 to Phe-223. The Extracellular segment spans residues Cys-224 to Asp-239. Residues Val-240–Ser-260 form a helical membrane-spanning segment. The Cytoplasmic segment spans residues Ser-261–Trp-271.

This sequence belongs to the PA-phosphatase related phosphoesterase family. Homo- and heterooligomer. Interacts with MTOR; controls MTOR-dependent IGF2 expression during myoblast differentiation.

It localises to the nucleus envelope. The protein localises to the endoplasmic reticulum membrane. It is found in the membrane. In terms of biological role, plays a role as negative regulator of myoblast differentiation, in part through effects on MTOR signaling. Has no detectable enzymatic activity. The protein is Inactive phospholipid phosphatase 7 of Rattus norvegicus (Rat).